The sequence spans 142 residues: Prefoldin subunit alpha 2 (142 aa).

The protein belongs to the prefoldin subunit alpha family. As to quaternary structure, heterohexamer of two alpha and four beta subunits.

The protein resides in the cytoplasm. Molecular chaperone capable of stabilizing a range of proteins. Seems to fulfill an ATP-independent, HSP70-like function in archaeal de novo protein folding. The chain is Prefoldin subunit alpha 2 from Thermococcus kodakarensis (strain ATCC BAA-918 / JCM 12380 / KOD1) (Pyrococcus kodakaraensis (strain KOD1)).